The sequence spans 255 residues: Cysteine protease avirulence protein AvrRpt2 (255 aa).

The segment at 1 to 50 (MKIAPVAINHSPLSREVPSHAAPTQAKQTNLQSEAGDLDARKSSASSPET) is disordered. Positions 1-71 (MKIAPVAINH…RHKIEVPAFG (71 aa)) are cleaved as a propeptide — removed in mature form. The segment at 70 to 71 (FG) is determinants of cleavage specificity. The interval 76-100 (KKSSKHETGGSSANADSSSVASDST) is disordered. Over residues 86-98 (SSANADSSSVASD) the composition is skewed to low complexity. Residue C122 is the Nucleophile of the active site. Catalysis depends on residues H208 and D226.

The protein belongs to the peptidase C70 family. In terms of assembly, interacts physically with plant cell ROC1 (Arabidopsis single-domain cyclophilin) and RIN4. Autocleaved inside plant cells upon activation by cyclophilin. Cleavage is crucial in subcellular location and in eliciting HR. Inhibited by cyclosporin A (cyclophilin inhibitor).

It is found in the secreted. The protein localises to the host cell membrane. Functionally, effector protein involved in gene-for-gene resistance in plants expressing RPS2. Its thiol protease activity is required for the degradation of plant cell RIN4 and consequent activation of RPS2 during bacterial infection. The activation of RPS2 is sufficient for the induction of hypersensitive response (HR) and plant resistance. Cleavage of RIN4 by AvrRpt2 also interferes with RPM1-mediated resistance activated by either AvrRpm1 or AvrB. Contributes to virulence in plants lacking the resistance protein RPS2 promoting pathogen growth and disease symptoms. Inhibits PAMP (pathogen-associated molecular patterns)-induced signaling compromising the host's basal defense system. Blocks plant callose deposition, flg22 (a peptide corresponding to the most conserved domain of flagellin) induced accumulation of PR-1, PR-2 and PR-5 and activation of GST6 transcription. The mechanism of virulence is unknown, but this activity is independent of ethylene and salicylic acid response pathways and independent of RIN4 disappearance. This Pseudomonas syringae pv. tomato protein is Cysteine protease avirulence protein AvrRpt2 (avrRpt2).